We begin with the raw amino-acid sequence, 188 residues long: Protein TIFY 9 (188 aa).

A disordered region spans residues aspartate 20 to glycine 41. The segment covering serine 28–serine 38 has biased composition (low complexity). In terms of domain architecture, Tify spans alanine 80–glutamate 114. The short motif at proline 135 to glutamine 160 is the Jas element. Residues leucine 156 to serine 188 form a disordered region. A compositionally biased stretch (basic and acidic residues) spans leucine 179–serine 188.

Belongs to the TIFY/JAZ family. Post-translationally, ubiquitinated. Targeted for degradation by the SCF(COI1) E3 ubiquitin ligase-proteasome pathway during jasmonate signaling.

In terms of biological role, repressor of jasmonate responses. The sequence is that of Protein TIFY 9 from Oryza sativa subsp. indica (Rice).